The primary structure comprises 643 residues: COP9 signalosome complex subunit 10 (643 aa).

The segment covering 1-33 (MTDESDNYNDFMMSDEDMDSIEMEDEENDVEGD) has biased composition (acidic residues). Residues 1 to 37 (MTDESDNYNDFMMSDEDMDSIEMEDEENDVEGDEGQR) are disordered. The region spanning 331–517 (CKEEFWECLK…DTVTFYSEQH (187 aa)) is the PCI domain. A compositionally biased stretch (polar residues) spans 573–584 (DSQSHSKSNTKS). Residues 573–594 (DSQSHSKSNTKSMSRHVSGHDP) are disordered.

As to quaternary structure, component of a COP9 signalosome-like (CSN) complex.

The protein localises to the cytoplasm. It is found in the nucleus. Component of the COP9 signalosome (CSN) complex that acts as an regulator of the ubiquitin (Ubl) conjugation pathway by mediating the deneddylation of the cullin subunit of SCF-type E3 ubiquitin-protein ligase complexes. The CSN complex is involved in the regulation of the mating pheromone response. The polypeptide is COP9 signalosome complex subunit 10 (RRI2) (Candida glabrata (strain ATCC 2001 / BCRC 20586 / JCM 3761 / NBRC 0622 / NRRL Y-65 / CBS 138) (Yeast)).